A 418-amino-acid chain; its full sequence is 3-isopropylmalate dehydratase large subunit 1 (418 aa).

3 residues coordinate [4Fe-4S] cluster: C298, C358, and C361.

The protein belongs to the aconitase/IPM isomerase family. LeuC type 2 subfamily. As to quaternary structure, heterodimer of LeuC and LeuD. [4Fe-4S] cluster serves as cofactor.

It catalyses the reaction (2R,3S)-3-isopropylmalate = (2S)-2-isopropylmalate. It functions in the pathway amino-acid biosynthesis; L-leucine biosynthesis; L-leucine from 3-methyl-2-oxobutanoate: step 2/4. Functionally, catalyzes the isomerization between 2-isopropylmalate and 3-isopropylmalate, via the formation of 2-isopropylmaleate. The protein is 3-isopropylmalate dehydratase large subunit 1 of Thermotoga maritima (strain ATCC 43589 / DSM 3109 / JCM 10099 / NBRC 100826 / MSB8).